The primary structure comprises 231 residues: uncharacterized protein (231 aa).

The first 25 residues, 1–25 (MAKWVPALLLRRVPLFSLRFRPASS), serve as a signal peptide directing secretion. Residues 26–200 (TFLPVLAATE…SRPSPSATLT (175 aa)) are Extracellular-facing. The disordered stretch occupies residues 39–64 (SVPSGDLSMPVKTRAEGEDDGFGEAG). Residues 201–225 (LLLASSCLLAPAPPSFILLLFTLIA) form a helical membrane-spanning segment. At 226–231 (PDLPHS) the chain is on the cytoplasmic side.

It localises to the membrane. This is an uncharacterized protein from Homo sapiens (Human).